The following is a 98-amino-acid chain: Keratin-associated protein 3-1 (98 aa).

An N-acetylalanine modification is found at Ala-2. 4 repeat units span residues 3 to 7 (CCAPR), 8 to 12 (CCSVR), 47 to 51 (FCDNS), and 55 to 59 (YHVPD). The tract at residues 3–59 (CCAPRCCSVRTGPATTICSSDQFCRCGVCLPSTCPHDISLLQPTFCDNSPVPYHVPD) is 4 X 5 AA repeats of C-C-X(3).

The protein belongs to the KRTAP type 3 family. As to quaternary structure, interacts with wool keratins. Wool.

Its function is as follows. In the wool cortex, wool keratin intermediate filaments are embedded in an interfilamentous matrix, consisting of hair keratin-associated proteins (KRTAP), which are essential for the formation of a rigid and resistant wool shaft through their extensive disulfide bond cross-linking with abundant cysteine residues of wool keratins. The matrix proteins include the high-sulfur and high-glycine-tyrosine keratins. The sequence is that of Keratin-associated protein 3-1 (KRTAP3-1) from Capra hircus (Goat).